The following is a 757-amino-acid chain: POU domain, class 2, transcription factor 1 (757 aa).

4 disordered regions span residues 1-43, 271-295, 375-398, and 532-574; these read MKLH…QTNG, AATP…SLEE, SLSN…RRKK, and VSSV…TSPL. Polar residues-rich tracts occupy residues 19–43 and 275–285; these read RMNN…QTNG and VQQLPQSQTTP. One can recognise a POU-specific domain in the interval 294–368; that stretch reads EEPSDLEELE…LLEKWLNDAE (75 aa). The segment at residues 395 to 454 is a DNA-binding region (homeobox); the sequence is RRKKRTSIETNIRVALEKSFLENQKPTSEEITMIADQLNMEKEVIRVWFCNRRQKEKRIN.

It belongs to the POU transcription factor family. Class-2 subfamily.

It localises to the cytoplasm. Its subcellular location is the nucleus. In terms of biological role, transcription factor that binds to the octamer motif (5'-ATTTGCAT-3') and activates the promoters of the genes for some small nuclear RNAs (snRNA) and histone H2B. Acts downstream of Notch signaling during radial glia formation. Regulates apoptosis, possibly via an FGF-signaling pathway. The protein is POU domain, class 2, transcription factor 1 of Xenopus tropicalis (Western clawed frog).